The following is a 148-amino-acid chain: Deoxyuridine 5'-triphosphate nucleotidohydrolase (148 aa).

Substrate contacts are provided by residues 67–69, Asn-80, 84–86, and Met-94; these read RSG and LID.

It belongs to the dUTPase family. The cofactor is Mg(2+).

The catalysed reaction is dUTP + H2O = dUMP + diphosphate + H(+). Its pathway is pyrimidine metabolism; dUMP biosynthesis; dUMP from dCTP (dUTP route): step 2/2. Its function is as follows. This enzyme is involved in nucleotide metabolism: it produces dUMP, the immediate precursor of thymidine nucleotides and it decreases the intracellular concentration of dUTP so that uracil cannot be incorporated into DNA. In Burkholderia cenocepacia (strain HI2424), this protein is Deoxyuridine 5'-triphosphate nucleotidohydrolase.